The chain runs to 687 residues: UvrABC system protein C (687 aa).

The 80-residue stretch at 16-95 folds into the GIY-YIG domain; that stretch reads TEPGVYKFRD…IKKFDPHFNV (80 aa). Residues 208–243 enclose the UVR domain; it reads DSVVRRLTNEMISASEALDFEKAARKRDDLNAVRKI.

The protein belongs to the UvrC family. Interacts with UvrB in an incision complex.

Its subcellular location is the cytoplasm. The UvrABC repair system catalyzes the recognition and processing of DNA lesions. UvrC both incises the 5' and 3' sides of the lesion. The N-terminal half is responsible for the 3' incision and the C-terminal half is responsible for the 5' incision. The chain is UvrABC system protein C from Corynebacterium diphtheriae (strain ATCC 700971 / NCTC 13129 / Biotype gravis).